A 338-amino-acid chain; its full sequence is Queuosine 5'-phosphate N-glycosylase/hydrolase (338 aa).

Met1 bears the N-acetylmethionine mark. Residues His51, Phe235, Asp237, Asp311, Tyr312, and Asp316 each contribute to the queuine site. Asp237 acts as the Nucleophile or transition state stabilizer in catalysis.

It belongs to the QNG1 protein family. In terms of tissue distribution, highly expressed in liver.

It carries out the reaction queuosine 5'-phosphate + H2O = queuine + D-ribose 5-phosphate. Catalyzes the hydrolysis of queuosine 5'-phosphate, releasing the nucleobase queuine (q). Is required for salvage of queuine from exogenous queuosine (Q) that is imported and then converted to queuosine 5'-phosphate intracellularly. The chain is Queuosine 5'-phosphate N-glycosylase/hydrolase from Mus musculus (Mouse).